The sequence spans 1234 residues: Chromosome-associated kinesin KIF4B (1234 aa).

Residues Pro9–Ile336 enclose the Kinesin motor domain. Gly88–Thr95 lines the ATP pocket. Positions Glu350–Val999 form a coiled coil. At Ser394 the chain carries Phosphoserine. Disordered stretches follow at residues Glu494–Thr513 and Lys712–Glu737. A compositionally biased stretch (polar residues) spans Val498–Thr513. Residues Gln663–His1234 are interaction with PRC1. The segment covering Arg713 to Glu737 has biased composition (basic and acidic residues). The Nuclear localization signal motif lies at Pro793–Cys798. Residue Thr799 is modified to Phosphothreonine. A phosphoserine mark is found at Ser801, Ser951, Ser1001, Ser1013, Ser1017, and Ser1028. The tract at residues Ala1000 to His1234 is globular. Disordered regions lie at residues Pro1007–Val1030, Val1052–Lys1076, Arg1122–Lys1143, and Thr1183–His1234. Residues Glu1056 to Glu1071 show a composition bias toward acidic residues. The interval Gln1086–Leu1144 is CRD; required for [4Fe-4S] cluster binding and localization to the spindle midzone and midbody during anaphase and telophase. Ser1128 bears the Phosphoserine mark. Thr1183 carries the phosphothreonine modification. Ser1188 is subject to Phosphoserine. Residue Lys1196 forms a Glycyl lysine isopeptide (Lys-Gly) (interchain with G-Cter in SUMO2) linkage. At Ser1227 the chain carries Phosphoserine.

It belongs to the TRAFAC class myosin-kinesin ATPase superfamily. Kinesin family. Chromokinesin subfamily. Requires [2Fe-2S] cluster as cofactor. [4Fe-4S] cluster serves as cofactor. As to expression, specifically expressed in testis.

The protein localises to the nucleus matrix. It is found in the cytoplasm. The protein resides in the cytoskeleton. Functionally, iron-sulfur (Fe-S) cluster binding motor protein that has a role in chromosome segregation during mitosis. Translocates PRC1 to the plus ends of interdigitating spindle microtubules during the metaphase to anaphase transition, an essential step for the formation of an organized central spindle midzone and midbody and for successful cytokinesis. May play a role in mitotic chromosomal positioning and bipolar spindle stabilization. In Homo sapiens (Human), this protein is Chromosome-associated kinesin KIF4B (KIF4B).